A 366-amino-acid polypeptide reads, in one-letter code: Ribosomal RNA large subunit methyltransferase M (366 aa).

Residues S188, 221 to 224, D240, D260, and D277 each bind S-adenosyl-L-methionine; that span reads CPGG. The active-site Proton acceptor is K306.

Belongs to the class I-like SAM-binding methyltransferase superfamily. RNA methyltransferase RlmE family. RlmM subfamily. As to quaternary structure, monomer.

The protein resides in the cytoplasm. The enzyme catalyses cytidine(2498) in 23S rRNA + S-adenosyl-L-methionine = 2'-O-methylcytidine(2498) in 23S rRNA + S-adenosyl-L-homocysteine + H(+). Functionally, catalyzes the 2'-O-methylation at nucleotide C2498 in 23S rRNA. This is Ribosomal RNA large subunit methyltransferase M from Pectobacterium atrosepticum (strain SCRI 1043 / ATCC BAA-672) (Erwinia carotovora subsp. atroseptica).